The sequence spans 174 residues: Fimbria A protein (174 aa).

The first 22 residues, 1-22 (MKLNKIMLATVLAFGVSSLANA), serve as a signal peptide directing secretion. Cys41 and Cys80 are oxidised to a cystine.

Belongs to the fimbrial protein family.

It localises to the fimbrium. Its function is as follows. Major structural component of mannose-resistant fimbriae of Serratia marcescens. This is Fimbria A protein (smfA) from Serratia marcescens.